The following is a 599-amino-acid chain: Putative fused cobalt transport protein CbiMQ (599 aa).

The interval 1 to 239 (MHIMEGFLPS…LLPSSDQNLS (239 aa)) is cbiM. A run of 16 helical transmembrane segments spans residues 12 to 32 (WWQF…AALI), 44 to 64 (LLGL…PSVG), 74 to 94 (FGAI…VLVF), 106 to 126 (TLGA…CIIF), 140 to 160 (SFSV…YMMT), 162 to 182 (LQLA…FVVY), 183 to 203 (LGIF…LIVL), 247 to 267 (IIAG…LAGL), 303 to 323 (WLFA…LYLL), 356 to 376 (QVSA…GVTS), 377 to 397 (PLPY…LIIA), 407 to 427 (LLTI…LITG), 438 to 458 (IGAF…LVLS), 463 to 483 (GMCS…FSVL), 493 to 513 (IDLS…AIAI), and 579 to 599 (MAVF…MLLL). Residues 341-599 (DEHILDDVAI…GLLCAEMLLL (259 aa)) form a cbiQ region.

In the N-terminal section; belongs to the CbiM family. It in the C-terminal section; belongs to the CbiQ family. In terms of assembly, forms an energy-coupling factor (ECF) transporter complex composed of an ATP-binding protein (A component, CbiO), a transmembrane protein (T component, CbiQ) and 2 possible substrate-capture proteins (S components, CbiM and CbiN) of unknown stoichimetry.

The protein localises to the cell membrane. The protein operates within cofactor biosynthesis; adenosylcobalamin biosynthesis. Its function is as follows. Part of the energy-coupling factor (ECF) transporter complex CbiMNOQ involved in cobalt import. The sequence is that of Putative fused cobalt transport protein CbiMQ (cbiMQ) from Methanocorpusculum labreanum (strain ATCC 43576 / DSM 4855 / Z).